Reading from the N-terminus, the 513-residue chain is Histidine ammonia-lyase (513 aa).

The segment at residues 146 to 148 (ASG) is a cross-link (5-imidazolinone (Ala-Gly)). 2,3-didehydroalanine (Ser) is present on Ser-147.

This sequence belongs to the PAL/histidase family. Contains an active site 4-methylidene-imidazol-5-one (MIO), which is formed autocatalytically by cyclization and dehydration of residues Ala-Ser-Gly.

The protein resides in the cytoplasm. It carries out the reaction L-histidine = trans-urocanate + NH4(+). The protein operates within amino-acid degradation; L-histidine degradation into L-glutamate; N-formimidoyl-L-glutamate from L-histidine: step 1/3. The sequence is that of Histidine ammonia-lyase from Shewanella oneidensis (strain ATCC 700550 / JCM 31522 / CIP 106686 / LMG 19005 / NCIMB 14063 / MR-1).